The primary structure comprises 242 residues: Carboxy-S-adenosyl-L-methionine synthase (242 aa).

Residues tyrosine 39, 64–66 (GCS), 89–90 (DN), 117–118 (DI), asparagine 132, and arginine 199 each bind S-adenosyl-L-methionine.

This sequence belongs to the class I-like SAM-binding methyltransferase superfamily. Cx-SAM synthase family. As to quaternary structure, homodimer.

It catalyses the reaction prephenate + S-adenosyl-L-methionine = carboxy-S-adenosyl-L-methionine + 3-phenylpyruvate + H2O. Its function is as follows. Catalyzes the conversion of S-adenosyl-L-methionine (SAM) to carboxy-S-adenosyl-L-methionine (Cx-SAM). In Aliivibrio salmonicida (strain LFI1238) (Vibrio salmonicida (strain LFI1238)), this protein is Carboxy-S-adenosyl-L-methionine synthase.